We begin with the raw amino-acid sequence, 245 residues long: Nucleoprotein (245 aa).

Residues Y30, K67, R106, R186, and S196 each coordinate RNA.

The protein belongs to the phlebovirus nucleocapsid protein family. Homodimer. Homohexamer; ring-shaped, necessary to form the nucleocapsid. Homopentamers; opened pentamers in solution. Binds to viral genomic RNA. Interacts with glycoprotein Gn; this interaction allows packaging of nucleocapsids into virions.

It is found in the virion. The protein resides in the host cytoplasm. The protein localises to the host nucleus. It localises to the host endoplasmic reticulum-Golgi intermediate compartment. Its subcellular location is the host Golgi apparatus. Encapsidates the genomic RNA, protecting it from nucleases. Displays high affinity for single-stranded nucleic acid. The encapsidated genomic RNA is termed the nucleocapsid (NC) or ribonucleoprotein. The ribonucleoprotein has a non-helical structure. Serves as template for viral transcription and replication. After replication, the nucleocapsid is recruited to the host Golgi apparatus by glycoprotein Gn for packaging into virus particles. The protein is Nucleoprotein (NP) of Dabie bandavirus (Severe fever with thrombocytopenia virus).